Here is a 329-residue protein sequence, read N- to C-terminus: 2,3,4,5-tetrahydropyridine-2,6-dicarboxylate N-succinyltransferase (329 aa).

Mg(2+) contacts are provided by aspartate 177 and glutamate 194. The active-site Acyl-anhydride intermediate is glutamate 210. Residues arginine 212, glycine 227, serine 230, alanine 253, 268–269 (EA), glycine 276, lysine 288, and 301–304 (RRNS) contribute to the succinyl-CoA site.

The protein belongs to the type 2 tetrahydrodipicolinate N-succinyltransferase family. In terms of assembly, homotrimer.

The protein resides in the cytoplasm. The enzyme catalyses (S)-2,3,4,5-tetrahydrodipicolinate + succinyl-CoA + H2O = (S)-2-succinylamino-6-oxoheptanedioate + CoA. The protein operates within amino-acid biosynthesis; L-lysine biosynthesis via DAP pathway; LL-2,6-diaminopimelate from (S)-tetrahydrodipicolinate (succinylase route): step 1/3. Functionally, catalyzes the conversion of the cyclic tetrahydrodipicolinate (THDP) into the acyclic N-succinyl-L-2-amino-6-oxopimelate using succinyl-CoA. The sequence is that of 2,3,4,5-tetrahydropyridine-2,6-dicarboxylate N-succinyltransferase from Streptomyces coelicolor (strain ATCC BAA-471 / A3(2) / M145).